A 1486-amino-acid polypeptide reads, in one-letter code: Chromosome partition protein MukB (1486 aa).

34–41 is an ATP binding site; it reads GGNGAGKS. 3 coiled-coil regions span residues 326 to 418, 444 to 480, and 509 to 603; these read LEAD…QYNQ, LETF…QAYQ, and RHLA…RAPV. The interval 666-783 is flexible hinge; that stretch reads PGGSEDQRLN…EVPLFGRAAR (118 aa). Coiled-coil stretches lie at residues 835–923, 977–1115, and 1209–1266; these read EAEI…AKLE, EMLS…TAKA, and VEAI…QNVS.

The protein belongs to the SMC family. MukB subfamily. In terms of assembly, homodimerization via its hinge domain. Binds to DNA via its C-terminal region. Interacts, and probably forms a ternary complex, with MukE and MukF via its C-terminal region. The complex formation is stimulated by calcium or magnesium. Interacts with tubulin-related protein FtsZ.

The protein resides in the cytoplasm. The protein localises to the nucleoid. In terms of biological role, plays a central role in chromosome condensation, segregation and cell cycle progression. Functions as a homodimer, which is essential for chromosome partition. Involved in negative DNA supercoiling in vivo, and by this means organize and compact chromosomes. May achieve or facilitate chromosome segregation by condensation DNA from both sides of a centrally located replisome during cell division. The polypeptide is Chromosome partition protein MukB (Escherichia coli O1:K1 / APEC).